A 337-amino-acid chain; its full sequence is Large ribosomal subunit protein uL10 (337 aa).

Residues 309–337 (EEVVEEQEEVKEEEEEESDMASGLGALFG) are disordered. Positions 310–327 (EVVEEQEEVKEEEEEESD) are enriched in acidic residues.

This sequence belongs to the universal ribosomal protein uL10 family. As to quaternary structure, part of the 50S ribosomal subunit. Forms part of the ribosomal stalk which helps the ribosome interact with GTP-bound translation factors. Forms a heptameric L10(L12)2(L12)2(L12)2 complex, where L10 forms an elongated spine to which the L12 dimers bind in a sequential fashion.

Its function is as follows. Forms part of the ribosomal stalk, playing a central role in the interaction of the ribosome with GTP-bound translation factors. The polypeptide is Large ribosomal subunit protein uL10 (Methanococcoides burtonii (strain DSM 6242 / NBRC 107633 / OCM 468 / ACE-M)).